We begin with the raw amino-acid sequence, 287 residues long: Centromere protein P (287 aa).

Residues Met1–Phe37 adopt a coiled-coil conformation.

It belongs to the CENP-P/CTF19 family. As to quaternary structure, component of the CENPA-HI complex, at least composed of CENPH, CENPI, CENPK, CENPL, CENPM, CENPO and CENPP.

It is found in the nucleus. The protein localises to the chromosome. The protein resides in the centromere. Functionally, component of the CENPA-HI complex, a centromeric complex involved in assembly of kinetochore proteins, mitotic progression and chromosome segregation. In Gallus gallus (Chicken), this protein is Centromere protein P (CENPP).